The primary structure comprises 253 residues: ER membrane protein complex subunit 3 (253 aa).

3 consecutive transmembrane segments (helical) span residues 10–30 (WVLL…QYIM), 126–146 (FIPQ…FILM), and 176–196 (SISW…LIGL).

It belongs to the EMC3 family. Component of the ER membrane protein complex (EMC), which is composed of EMC1, EMC2, EMC3, EMC4, EMC5 and EMC6.

Its subcellular location is the endoplasmic reticulum membrane. The EMC seems to be required for efficient folding of proteins in the endoplasmic reticulum (ER). This is ER membrane protein complex subunit 3 (AIM27) from Saccharomyces cerevisiae (strain YJM789) (Baker's yeast).